Reading from the N-terminus, the 177-residue chain is Superoxide dismutase [Cu-Zn] 1 (177 aa).

The N-terminal stretch at 1 to 20 is a signal peptide; sequence MKYTILSLVAGALISCSAMA. Cu cation is bound by residues His69, His71, and His94. A disulfide bridge links Cys76 with Cys172. Zn(2+)-binding residues include His94, His103, His112, and Asp115. Cu cation is bound at residue His150.

The protein belongs to the Cu-Zn superoxide dismutase family. In terms of assembly, monomer. Cu cation is required as a cofactor. Zn(2+) serves as cofactor.

The protein resides in the periplasm. It carries out the reaction 2 superoxide + 2 H(+) = H2O2 + O2. Destroys radicals which are normally produced within the cells and which are toxic to biological systems. This chain is Superoxide dismutase [Cu-Zn] 1 (sodC1), found in Salmonella typhimurium (strain 4/74).